We begin with the raw amino-acid sequence, 376 residues long: Queuine tRNA-ribosyltransferase (376 aa).

The active-site Proton acceptor is the Asp89. Substrate contacts are provided by residues 89 to 93 (DSGGF), Asp143, Gln194, and Gly221. The interval 252-258 (GVGLPSN) is RNA binding. Catalysis depends on Asp271, which acts as the Nucleophile. The interval 276–280 (ARNGR) is RNA binding; important for wobble base 34 recognition. The Zn(2+) site is built by Cys309, Cys311, Cys314, and His340.

This sequence belongs to the queuine tRNA-ribosyltransferase family. In terms of assembly, homodimer. Within each dimer, one monomer is responsible for RNA recognition and catalysis, while the other monomer binds to the replacement base PreQ1. Zn(2+) serves as cofactor.

It carries out the reaction 7-aminomethyl-7-carbaguanine + guanosine(34) in tRNA = 7-aminomethyl-7-carbaguanosine(34) in tRNA + guanine. It participates in tRNA modification; tRNA-queuosine biosynthesis. In terms of biological role, catalyzes the base-exchange of a guanine (G) residue with the queuine precursor 7-aminomethyl-7-deazaguanine (PreQ1) at position 34 (anticodon wobble position) in tRNAs with GU(N) anticodons (tRNA-Asp, -Asn, -His and -Tyr). Catalysis occurs through a double-displacement mechanism. The nucleophile active site attacks the C1' of nucleotide 34 to detach the guanine base from the RNA, forming a covalent enzyme-RNA intermediate. The proton acceptor active site deprotonates the incoming PreQ1, allowing a nucleophilic attack on the C1' of the ribose to form the product. After dissociation, two additional enzymatic reactions on the tRNA convert PreQ1 to queuine (Q), resulting in the hypermodified nucleoside queuosine (7-(((4,5-cis-dihydroxy-2-cyclopenten-1-yl)amino)methyl)-7-deazaguanosine). The chain is Queuine tRNA-ribosyltransferase from Clostridium tetani (strain Massachusetts / E88).